Reading from the N-terminus, the 383-residue chain is Methenyltetrahydrofolate synthase domain-containing protein (383 aa).

The interval alanine 249–glycine 301 is disordered. In terms of domain architecture, RRM spans alanine 306 to glutamine 379.

This is Methenyltetrahydrofolate synthase domain-containing protein (MTHFSD) from Homo sapiens (Human).